Consider the following 154-residue polypeptide: 3-hydroxyacyl-[acyl-carrier-protein] dehydratase FabZ (154 aa).

H55 is a catalytic residue.

It belongs to the thioester dehydratase family. FabZ subfamily.

Its subcellular location is the cytoplasm. The enzyme catalyses a (3R)-hydroxyacyl-[ACP] = a (2E)-enoyl-[ACP] + H2O. In terms of biological role, involved in unsaturated fatty acids biosynthesis. Catalyzes the dehydration of short chain beta-hydroxyacyl-ACPs and long chain saturated and unsaturated beta-hydroxyacyl-ACPs. The sequence is that of 3-hydroxyacyl-[acyl-carrier-protein] dehydratase FabZ from Nitratidesulfovibrio vulgaris (strain ATCC 29579 / DSM 644 / CCUG 34227 / NCIMB 8303 / VKM B-1760 / Hildenborough) (Desulfovibrio vulgaris).